The chain runs to 574 residues: Adenine deaminase (574 aa).

Belongs to the metallo-dependent hydrolases superfamily. Adenine deaminase family. Mn(2+) is required as a cofactor.

The catalysed reaction is adenine + H2O + H(+) = hypoxanthine + NH4(+). This chain is Adenine deaminase, found in Thermosipho melanesiensis (strain DSM 12029 / CIP 104789 / BI429).